The sequence spans 366 residues: Leucine dehydrogenase (366 aa).

Residue lysine 82 is part of the active site. 182–188 (GVGNVAY) lines the NAD(+) pocket.

This sequence belongs to the Glu/Leu/Phe/Val dehydrogenases family.

It carries out the reaction L-leucine + NAD(+) + H2O = 4-methyl-2-oxopentanoate + NH4(+) + NADH + H(+). The protein operates within amino-acid degradation; L-leucine degradation; 4-methyl-2-oxopentanoate from L-leucine (dehydrogenase route): step 1/1. Functionally, catalyzes the reversible deamination of L-leucine to 4-methyl-2-oxopentanoate. The protein is Leucine dehydrogenase (ldh) of Bacillus cereus.